The chain runs to 542 residues: Quinidine resistance protein 2 (542 aa).

The Cytoplasmic portion of the chain corresponds to 1-67 (MAGATSSIIR…SFKTVLIAQC (67 aa)). The residue at position 21 (Ser21) is a Phosphoserine. A Phosphothreonine modification is found at Thr38. Ser40 carries the phosphoserine modification. Residues 68-88 (AFTGFFSTIAGAIYYPVLSVI) form a helical membrane-spanning segment. Residues 89 to 100 (ERKFDIDEELVN) are Extracellular-facing. A helical membrane pass occupies residues 101–121 (VTVVVYFVFQGLAPTFMGGFA). At 122 to 127 (DSLGRR) the chain is on the cytoplasmic side. Residues 128-148 (PVVLVAIVIYFGACIGLACAQ) traverse the membrane as a helical segment. Residue Thr149 is a topological domain, extracellular. Residues 150–170 (YAQIIVLRCLQAAGISPVIAI) form a helical membrane-spanning segment. Residues 171–187 (NSGIMGDVTTRAERGGY) are Cytoplasmic-facing. Residues 188 to 208 (VGYVAGFQVLGSAFGALIGAG) traverse the membrane as a helical segment. The Extracellular segment spans residues 209–216 (LSSRWGWR). Residues 217–237 (AIFWFLAIGSGICFLASFLIL) traverse the membrane as a helical segment. Topologically, residues 238–300 (PETKRNISGN…APFKILKAYE (63 aa)) are cytoplasmic. The helical transmembrane segment at 301-321 (ICILMLVAGLQFAMYTTHLTA) threads the bilayer. Residues 322–333 (LSTALSKQYHLT) are Extracellular-facing. Residues 334–354 (VAKVGLCYLPSGICTLCSIVI) traverse the membrane as a helical segment. Over 355-413 (AGRYLNWNYRRRLKYYQNWLGKKRSKLLEEHDNDLNLVQRIIENDPKYTFNIFKARLQP) the chain is Cytoplasmic. The helical transmembrane segment at 414 to 434 (AFVTLLLSSSGFCAYGWCITV) threads the bilayer. Over 435–437 (KAP) the chain is Extracellular. Residues 438-458 (LAAVLCMSGFASLFSNCILTF) form a helical membrane-spanning segment. Residues 459 to 472 (STTLIVDLFPTKTS) lie on the Cytoplasmic side of the membrane. Residues 473–493 (TATGCLNLFRCILSAVFIAAL) traverse the membrane as a helical segment. Residues 494–503 (SKMVEKMKFG) are Extracellular-facing. The chain crosses the membrane as a helical span at residues 504–524 (GVFTFLGALTSSSSILLFILL). Residues 525-542 (RKGKELAFKRKKQELGVN) are Cytoplasmic-facing.

The protein belongs to the major facilitator superfamily. CAR1 family.

The protein resides in the cell membrane. Functionally, multidrug resistance transporter involved in resistance and adaptation to quinidine and to the herbicide barban (4-chloro-2-butynyl [3-chlorophenyl] carbamate). Implicated in potassium uptake. This is Quinidine resistance protein 2 (QDR2) from Saccharomyces cerevisiae (strain ATCC 204508 / S288c) (Baker's yeast).